Consider the following 443-residue polypeptide: EGF-containing fibulin-like extracellular matrix protein 2 (443 aa).

The N-terminal stretch at 1–27 (MLPFASCLPGSLLLWAFLLLLLGAASP) is a signal peptide. Q28 carries the post-translational modification Pyrrolidone carboxylic acid. Positions 36 to 81 (YTECTDGYEWDADSQHCRDVNECLTIPEACKGEMKCINHYGGYLCL) constitute an EGF-like 1; atypical domain. 18 cysteine pairs are disulfide-bonded: C58–C121, C65–C80, C71–C109, C127–C140, C134–C149, C151–C162, C168–C177, C173–C186, C188–C201, C207–C217, C213–C226, C228–C241, C247–C258, C254–C267, C269–C281, C287–C300, C294–C309, and C315–C327. Residues 91–117 (LHGEGPPPPAAHAQQPNPCPQGYEPDE) form a disordered region. Residues 123–163 (DVDECTQALHDCRPSQDCHNLPGSYQCTCPDGYRKIGPECV) enclose the EGF-like 2; calcium-binding domain. Residues 164 to 202 (DIDECRYRYCQHRCVNLPGSFRCQCEPGFQLGPNNRSCV) form the EGF-like 3; calcium-binding domain. N198 is a glycosylation site (N-linked (GlcNAc...) asparagine). An EGF-like 4; calcium-binding domain is found at 203–242 (DVNECDMGAPCEQRCFNSYGTFLCRCNQGYELHRDGFSCS). In terms of domain architecture, EGF-like 5; calcium-binding spans 243-282 (DIDECGYSSYLCQYRCVNEPGRFSCHCPQGYQLLATRLCQ). The region spanning 283–328 (DIDECETGAHQCSEAQTCVNFHGGYRCVDTNRCVEPYVQVSDNRCL) is the EGF-like 6; calcium-binding domain. N394 carries an N-linked (GlcNAc...) asparagine glycan.

The protein belongs to the fibulin family. Homodimer; disulfide-linked. Multimer; allows heparin binding. Monomer. Binds preferentially to p53 mutants. Interacts with FBN1 (via N-terminal domain); this interaction inhibits EFEMP2 binding to LOX and ELN. Interacts with ELN with moderate affinity; this interaction regulates ELN self-assembly maturation stage. Interacts with PCOLCE. Interacts with collagen type IV trimer (COL4A1-COL4A1-COL4A2), NID2 and moderately with COL15A1-derived endostatin. Interacts with EMILIN1; this interaction promotes the incorporation of EFEMP2 into the extracellular matrix. Interacts with LTBP4; the LTBP4 long form (LTBP4L) has a stronger binding affinity than the LTBP4 short form and the LTBP4 long form promotes fibrillar deposition of EFEMP2. Interacts with LOX (via propeptide); this interaction is strong and facilitates formation of ternary complexes with ELN during elastic fiber assembly; this interaction limits interaction of EFEMP2 with FBLN5. Interacts with PITX2. Interacts with FBLN5 with moderate affinity. Interacts with LOXL1 (via propeptide), LTBP1 and TGFB1 stronger than with LOXL2 and LTBP3. In terms of processing, N-glycosylated; contains mostly complex-type glycans. Not O-glycosylated. Post-translationally, cleaved by ELANE; produces a 50-55 kDa fragment. Cleaved by MMP2 and MMP9; produces several fragments. Expressed in elastic fibers of the skin, near the dermal-epidermal junction, surrounding the hair follicles and throughout the dermis. Expressed in tendon around tenocytes. Prominently expressed in cartilage, bone, perichondrium and ligaments. Also detected in bone marrow stroma. Expressed in aorta, lung, and esophagus.

The protein localises to the secreted. It localises to the extracellular space. It is found in the extracellular matrix. The protein resides in the basement membrane. Plays a crucial role in elastic fiber formation in tissue, and in the formation of ultrastructural connections between elastic laminae and smooth muscle cells in the aorta, therefore participates in terminal differentiation and maturation of smooth muscle cell (SMC) and in the mechanical properties and wall integrity maintenance of the aorta. In addition, is involved in the control of collagen fibril assembly in tissue throught proteolytic activation of LOX leading to cross- linking of collagen and elastin. Also promotes ELN coacervation and participates in the deposition of ELN coacervates on to microfibrils but also regulates ELN cross- linking through LOX interaction. Moreover adheres to the cells through heparin binding in a calcium-dependent manner and regulates vascularlar smooth muscle cells proliferation through angiotensin signaling. The polypeptide is EGF-containing fibulin-like extracellular matrix protein 2 (Mus musculus (Mouse)).